The sequence spans 1030 residues: Isoleucine--tRNA ligase 2 (1030 aa).

Positions P48–H58 match the 'HIGH' region motif. Residues K589–R593 carry the 'KMSKS' region motif. K592 provides a ligand contact to ATP.

It belongs to the class-I aminoacyl-tRNA synthetase family. IleS type 2 subfamily. In terms of assembly, monomer. Zn(2+) serves as cofactor.

The protein resides in the cytoplasm. It catalyses the reaction tRNA(Ile) + L-isoleucine + ATP = L-isoleucyl-tRNA(Ile) + AMP + diphosphate. Its function is as follows. Catalyzes the attachment of isoleucine to tRNA(Ile). As IleRS can inadvertently accommodate and process structurally similar amino acids such as valine, to avoid such errors it has two additional distinct tRNA(Ile)-dependent editing activities. One activity is designated as 'pretransfer' editing and involves the hydrolysis of activated Val-AMP. The other activity is designated 'posttransfer' editing and involves deacylation of mischarged Val-tRNA(Ile). Functionally, confers high-level resistance to the antibiotic mupirocin (pseudomonic acid A), an Ile-analog produced by P.fluorescens NCIMB 10586 itself that competitively inhibits activation by Ile-tRNA synthetase, thus inhibiting protein biosynthesis. The polypeptide is Isoleucine--tRNA ligase 2 (ileS2) (Pseudomonas fluorescens).